Reading from the N-terminus, the 435-residue chain is Putrescine transporter PotE (435 aa).

A run of 12 helical transmembrane segments spans residues 8–28 (IGVVQLTILTMVNMMGSGIIM), 39–59 (ISIVSWLVTAVGSTALAYAFA), 95–115 (LVIANTAIAISAVGYGSELFG), 117–137 (ILSPLSIALWTIFTLWLATVL), 148–168 (ISSFTIWGVIIPVVGISIIGW), 185–205 (VPTFEAIGVSISMTLWAFLGL), 224–244 (IAVLGGTLGAAVIYIVSTNVI), 275–295 (VIMGLMVMSCFGSLLGWQFTI), 320–340 (APVVGMITITALQTLLSLMTI), 354–374 (LAVVTNVIPYLLSMAALAVLL), 386–406 (TTVFVAFIGSLYSIYALYAAG), and 409–429 (AMLYGSIVTFIGWTLYGFVSY).

It belongs to the amino acid-polyamine-organocation (APC) superfamily. Basic amino acid/polyamine antiporter (APA) (TC 2.A.3.2) family.

The protein localises to the cell inner membrane. It carries out the reaction putrescine(in) + H(+)(in) = putrescine(out) + H(+)(out). The catalysed reaction is putrescine(in) + L-ornithine(out) = putrescine(out) + L-ornithine(in). In terms of biological role, catalyzes both the uptake and excretion of putrescine. The uptake of putrescine is dependent on the membrane potential and the excretion involves putrescine-ornithine antiporter activity. This is Putrescine transporter PotE from Haemophilus influenzae (strain ATCC 51907 / DSM 11121 / KW20 / Rd).